The primary structure comprises 568 residues: Mannitol 2-dehydrogenase (568 aa).

109 to 120 (IVHVGVGGFHRA) serves as a coordination point for NAD(+).

It belongs to the mannitol dehydrogenase family. In terms of assembly, monomer.

It carries out the reaction D-mannitol + NAD(+) = D-fructose + NADH + H(+). Functionally, catalyzes the NAD(H)-dependent interconversion of D-fructose and D-mannitol in the mannitol metabolic pathway. The protein is Mannitol 2-dehydrogenase of Phaeosphaeria nodorum (strain SN15 / ATCC MYA-4574 / FGSC 10173) (Glume blotch fungus).